A 190-amino-acid chain; its full sequence is NADH-quinone oxidoreductase subunit B (190 aa).

[4Fe-4S] cluster is bound by residues Cys-39, Cys-40, Cys-104, and Cys-135.

The protein belongs to the complex I 20 kDa subunit family. NDH-1 is composed of 14 different subunits. Subunits NuoB, C, D, E, F, and G constitute the peripheral sector of the complex. It depends on [4Fe-4S] cluster as a cofactor.

It is found in the cell inner membrane. It carries out the reaction a quinone + NADH + 5 H(+)(in) = a quinol + NAD(+) + 4 H(+)(out). NDH-1 shuttles electrons from NADH, via FMN and iron-sulfur (Fe-S) centers, to quinones in the respiratory chain. The immediate electron acceptor for the enzyme in this species is believed to be a menaquinone. Couples the redox reaction to proton translocation (for every two electrons transferred, four hydrogen ions are translocated across the cytoplasmic membrane), and thus conserves the redox energy in a proton gradient. The chain is NADH-quinone oxidoreductase subunit B from Chlorobium phaeobacteroides (strain BS1).